We begin with the raw amino-acid sequence, 214 residues long: Epoxide hydrolase EphH (214 aa).

The Nucleophile role is filled by serine 28. Catalysis depends on charge relay system residues aspartate 156 and histidine 186.

Belongs to the AB hydrolase superfamily.

It carries out the reaction an epoxide + H2O = an ethanediol. With respect to regulation, inhibited by AUDA, a known epoxide hydrolase inhibitor. In terms of biological role, catalyzes the hydrolysis of epoxide-containing substrates. In vitro, catalyzes the hydrolysis of the synthetic compounds PHOME and styrene oxide. Plays an essential role in subverting phagosomal acidification. Plays a major role in the survival of M.tuberculosis (Mtb) during in vitro acidic stress and protects Mtb in response to phagosomal acidification inside macrophages. Also supports Mtb growth under the nutrient-deprived condition at pH 7.0. The protein is Epoxide hydrolase EphH of Mycobacterium tuberculosis (strain ATCC 25618 / H37Rv).